The following is a 306-amino-acid chain: Beta-lactamase 1 (306 aa).

A signal peptide spans 1–27; the sequence is MILKNKRMLKIGICVGILGLSITSLEA. S91 (acyl-ester intermediate) is an active-site residue. The Proton acceptor role is filled by E187. Position 253-255 (253-255) interacts with substrate; that stretch reads KSG.

The protein belongs to the class-A beta-lactamase family.

It catalyses the reaction a beta-lactam + H2O = a substituted beta-amino acid. Its function is as follows. This protein is a beta-lactamase with a substrate specificity for penicillins. The chain is Beta-lactamase 1 (blaY) from Bacillus cereus.